The sequence spans 200 residues: Ribosome maturation factor RimP (200 aa).

It belongs to the RimP family.

Its subcellular location is the cytoplasm. Required for maturation of 30S ribosomal subunits. The protein is Ribosome maturation factor RimP of Polaromonas sp. (strain JS666 / ATCC BAA-500).